We begin with the raw amino-acid sequence, 128 residues long: Small ribosomal subunit protein uS11 (128 aa).

The protein belongs to the universal ribosomal protein uS11 family. In terms of assembly, part of the 30S ribosomal subunit. Interacts with proteins S7 and S18. Binds to IF-3.

Functionally, located on the platform of the 30S subunit, it bridges several disparate RNA helices of the 16S rRNA. Forms part of the Shine-Dalgarno cleft in the 70S ribosome. This Chromohalobacter salexigens (strain ATCC BAA-138 / DSM 3043 / CIP 106854 / NCIMB 13768 / 1H11) protein is Small ribosomal subunit protein uS11.